Here is a 696-residue protein sequence, read N- to C-terminus: Elongation factor G (696 aa).

Residues 8 to 286 (EDVRNIGIAA…AVVHYLPSPV (279 aa)) enclose the tr-type G domain. GTP is bound by residues 17–24 (AHIDAGKT), 81–85 (DTPGH), and 135–138 (NKMD).

The protein belongs to the TRAFAC class translation factor GTPase superfamily. Classic translation factor GTPase family. EF-G/EF-2 subfamily.

The protein resides in the cytoplasm. Catalyzes the GTP-dependent ribosomal translocation step during translation elongation. During this step, the ribosome changes from the pre-translocational (PRE) to the post-translocational (POST) state as the newly formed A-site-bound peptidyl-tRNA and P-site-bound deacylated tRNA move to the P and E sites, respectively. Catalyzes the coordinated movement of the two tRNA molecules, the mRNA and conformational changes in the ribosome. This chain is Elongation factor G, found in Sulfurovum sp. (strain NBC37-1).